A 554-amino-acid chain; its full sequence is Inactive sesquithujene synthase B (554 aa).

Mg(2+) is bound by residues Asp308 and Asp312. The substrate site is built by Asp308, Asp312, Arg449, and Asn452. A DDXXD motif motif is present at residues 308–312 (DDMFD). Positions 452, 456, and 460 each coordinate Mg(2+).

The protein belongs to the terpene synthase family. In terms of assembly, monomer. Requires Mg(2+) as cofactor. Mn(2+) is required as a cofactor.

It localises to the cytoplasm. It functions in the pathway secondary metabolite biosynthesis; terpenoid biosynthesis. In terms of biological role, non-functional sesquiterpene synthase having less than 1% of the activity found in TPS5A. The polypeptide is Inactive sesquithujene synthase B (Zea mays (Maize)).